Here is a 377-residue protein sequence, read N- to C-terminus: tRNA-queuosine alpha-mannosyltransferase (377 aa).

This sequence belongs to the glycosyltransferase group 1 family. Glycosyltransferase 4 subfamily.

It carries out the reaction queuosine(34) in tRNA(Asp) + GDP-alpha-D-mannose = O-4''-alpha-D-mannosylqueuosine(34) in tRNA(Asp) + GDP + H(+). Its function is as follows. Glycosyltransferase that specifically catalyzes mannosylation of cytoplasmic tRNA(Asp) modified with queuosine at position 34 (queuosine(34)). Mannosylates the cyclopentene moiety of queuosine(34) in tRNA(Asp) to form mannosyl-queuosine(34). The polypeptide is tRNA-queuosine alpha-mannosyltransferase (Drosophila melanogaster (Fruit fly)).